The following is a 201-amino-acid chain: UPF0301 protein Arad_1256 (201 aa).

The protein belongs to the UPF0301 (AlgH) family.

In Rhizobium rhizogenes (strain K84 / ATCC BAA-868) (Agrobacterium radiobacter), this protein is UPF0301 protein Arad_1256.